The chain runs to 124 residues: Putative peptidyl-tRNA hydrolase (124 aa).

It belongs to the PTH2 family.

It catalyses the reaction an N-acyl-L-alpha-aminoacyl-tRNA + H2O = an N-acyl-L-amino acid + a tRNA + H(+). This chain is Putative peptidyl-tRNA hydrolase, found in Fowlpox virus (strain NVSL) (FPV).